Reading from the N-terminus, the 635-residue chain is Biosynthetic arginine decarboxylase (635 aa).

K100 bears the N6-(pyridoxal phosphate)lysine mark. Residue 282–292 (VDIGGGLGVDY) coordinates substrate.

It belongs to the Orn/Lys/Arg decarboxylase class-II family. SpeA subfamily. Requires Mg(2+) as cofactor. Pyridoxal 5'-phosphate serves as cofactor.

It carries out the reaction L-arginine + H(+) = agmatine + CO2. It participates in amine and polyamine biosynthesis; agmatine biosynthesis; agmatine from L-arginine: step 1/1. Its function is as follows. Catalyzes the biosynthesis of agmatine from arginine. This is Biosynthetic arginine decarboxylase from Geobacter metallireducens (strain ATCC 53774 / DSM 7210 / GS-15).